Reading from the N-terminus, the 80-residue chain is Styelin-C (80 aa).

Positions 1-22 (MQMKATILIVLVALFMIQQSEA) are cleaved as a signal peptide. The residue at position 24 (tryptophan 24) is a 6'-bromotryptophan. At leucine 53 the chain carries Leucine amide. The propeptide at 55–80 (DMTDEEFQEFMQDIEQAREEELLSRQ) is removed in mature form.

Its subcellular location is the secreted. In terms of biological role, bactericidal against several Gram-positive and Gram-negative bacteria. The chain is Styelin-C from Styela clava (Sea squirt).